The sequence spans 497 residues: 4,4'-diapolycopene oxygenase (497 aa).

It belongs to the carotenoid/retinoid oxidoreductase family. FAD is required as a cofactor.

It carries out the reaction all-trans-4,4'-diapolycopene + 4 AH2 + 4 O2 = all-trans-4,4'-diapolycopene-4,4'-dial + 4 A + 6 H2O. It catalyses the reaction all-trans-4,4'-diaponeurosporene + 2 AH2 + 2 O2 = 4,4'-diaponeurosporenal + 2 A + 3 H2O. It functions in the pathway carotenoid biosynthesis. Involved in the biosynthesis of C30 carotenoids. Catalyzes the oxidation of the terminal methyl side groups of 4,4'-diapolycopene to yield 4,4'-diapolycopen-4,4'-dial via the aldehyde intermediate 4,4'-diapolycopen-al. Also able to catalyze the oxidation of the terminal methyl side group of 4,4'-diaponeurosporene to form 4,4'-diaponeurosporen-4-al. It has moderate to low activity on the C40 substrates neurosporene and lycopene, and has no detectable activity on zeta-carotene or beta-carotene. In Methylomonas sp, this protein is 4,4'-diapolycopene oxygenase.